A 456-amino-acid chain; its full sequence is Heme sensor protein HssS (456 aa).

The next 2 helical transmembrane spans lie at 9-29 and 164-184; these read IAIYTITVILFSALVSFLFAN and TFLAVLLICLLGISITLVIAS. The 53-residue stretch at 186 to 238 folds into the HAMP domain; it reads YSIIKPIKILKQATERLMHGDFNSPIYQSRHDEIGTLQYRFEAMRQSLKQVDD. The Histidine kinase domain occupies 246-456; that stretch reads NVSHEIKTPL…TFTVTLPETN (211 aa). Phosphohistidine; by autocatalysis is present on His-249.

In terms of processing, autophosphorylated.

The protein resides in the cell membrane. The catalysed reaction is ATP + protein L-histidine = ADP + protein N-phospho-L-histidine.. In terms of biological role, member of the two-component regulatory system HssS/HssR involved in intracellular heme homeostasis and tempering of staphylococcal virulence. HssS functions as a heme sensor histidine kinase which is autophosphorylated at a histidine residue and transfers its phosphate group to an aspartate residue of HssR. HssR/HssS activates the expression of hrtAB, an efflux pump, in response to extracellular heme, hemin, hemoglobin or blood. The polypeptide is Heme sensor protein HssS (hssS) (Staphylococcus haemolyticus (strain JCSC1435)).